The primary structure comprises 263 residues: Ribonuclease HII (263 aa).

The RNase H type-2 domain occupies 71–262; that stretch reads QAIAGIDEVG…VKSMCCDSTN (192 aa). D77, E78, and D172 together coordinate a divalent metal cation.

Belongs to the RNase HII family. Mn(2+) is required as a cofactor. Mg(2+) serves as cofactor.

Its subcellular location is the cytoplasm. The catalysed reaction is Endonucleolytic cleavage to 5'-phosphomonoester.. Functionally, endonuclease that specifically degrades the RNA of RNA-DNA hybrids. This chain is Ribonuclease HII, found in Streptococcus pyogenes serotype M5 (strain Manfredo).